The primary structure comprises 721 residues: mRNA (2'-O-methyladenosine-N(6)-)-methyltransferase (721 aa).

Polar residues-rich tracts occupy residues 1–10 (MTSENHTTIK) and 19–36 (PTGSTSQAAPFSPSTSKP). The disordered stretch occupies residues 1–37 (MTSENHTTIKADSALVMSPTGSTSQAAPFSPSTSKPI). Positions 43–77 (ELIQAGWSKCWSKRENRPYYFNRFTNQSLWEMPVL) constitute a WW domain. The interval 93-170 (PASGEANADA…KQGQASTPAP (78 aa)) is disordered. Residues 132-148 (IPATPTTPTVPISPSTP) show a composition bias toward low complexity. Residues arginine 239 and arginine 269 each coordinate substrate. 558-561 (NPPF) contributes to the S-adenosyl-L-methionine binding site. Substrate-binding positions include glutamate 563 and 593 to 597 (WRDPP). 619–621 (FEH) lines the S-adenosyl-L-methionine pocket. The segment covering 675 to 686 (SGRSLPSPGPSS) has biased composition (low complexity). The disordered stretch occupies residues 675–721 (SGRSLPSPGPSSTNTGEKDSKPAPERTAPSQDNSSPVDKTAQDTTNT). The span at 702–721 (APSQDNSSPVDKTAQDTTNT) shows a compositional bias: polar residues.

The protein belongs to the CAPAM family.

It localises to the nucleus. The enzyme catalyses a 5'-end (N(7)-methyl 5'-triphosphoguanosine)-(2'-O-methyladenosine) in mRNA + S-adenosyl-L-methionine = a 5'-end (N(7)-methyl 5'-triphosphoguanosine)-(N(6),2'-O-dimethyladenosine) in mRNA + S-adenosyl-L-homocysteine + H(+). With respect to regulation, cap-specific adenosine methyltransferase activity is inhibited by zinc. In terms of biological role, cap-specific adenosine methyltransferase that catalyzes formation of N(6),2'-O-dimethyladenosine cap (m6A(m)) by methylating the adenosine at the second transcribed position of capped mRNAs. The protein is mRNA (2'-O-methyladenosine-N(6)-)-methyltransferase (pcif1) of Danio rerio (Zebrafish).